Reading from the N-terminus, the 207-residue chain is Ribosomal RNA large subunit methyltransferase E (207 aa).

Positions 60, 62, 80, 96, and 121 each coordinate S-adenosyl-L-methionine. K161 (proton acceptor) is an active-site residue.

This sequence belongs to the class I-like SAM-binding methyltransferase superfamily. RNA methyltransferase RlmE family.

The protein resides in the cytoplasm. It carries out the reaction uridine(2552) in 23S rRNA + S-adenosyl-L-methionine = 2'-O-methyluridine(2552) in 23S rRNA + S-adenosyl-L-homocysteine + H(+). Specifically methylates the uridine in position 2552 of 23S rRNA at the 2'-O position of the ribose in the fully assembled 50S ribosomal subunit. In Pseudomonas aeruginosa (strain UCBPP-PA14), this protein is Ribosomal RNA large subunit methyltransferase E.